The primary structure comprises 305 residues: tRNA uridine(34) hydroxylase (305 aa).

The Rhodanese domain occupies 125 to 219 (ADENTVVVDT…YLEEVPREQS (95 aa)). The active-site Cysteine persulfide intermediate is Cys-179.

The protein belongs to the TrhO family.

The enzyme catalyses uridine(34) in tRNA + AH2 + O2 = 5-hydroxyuridine(34) in tRNA + A + H2O. Its function is as follows. Catalyzes oxygen-dependent 5-hydroxyuridine (ho5U) modification at position 34 in tRNAs. This chain is tRNA uridine(34) hydroxylase, found in Brucella ovis (strain ATCC 25840 / 63/290 / NCTC 10512).